Here is a 263-residue protein sequence, read N- to C-terminus: Indole-3-glycerol phosphate synthase (263 aa).

The protein belongs to the TrpC family.

The enzyme catalyses 1-(2-carboxyphenylamino)-1-deoxy-D-ribulose 5-phosphate + H(+) = (1S,2R)-1-C-(indol-3-yl)glycerol 3-phosphate + CO2 + H2O. It participates in amino-acid biosynthesis; L-tryptophan biosynthesis; L-tryptophan from chorismate: step 4/5. This is Indole-3-glycerol phosphate synthase from Aliarcobacter butzleri (strain RM4018) (Arcobacter butzleri).